The sequence spans 314 residues: MIOREX complex component 8 (314 aa).

The region spanning 132 to 312 (TLPEVIFLGG…RYVIFQSCGL (181 aa)) is the EngB-type G domain. Residues 140-147 (GGTNVGKS), 173-177 (GFTKT), 191-194 (DSPG), 253-256 (TKMD), and 290-292 (SST) contribute to the GTP site. Residues serine 147 and threonine 175 each coordinate Mg(2+).

It belongs to the TRAFAC class TrmE-Era-EngA-EngB-Septin-like GTPase superfamily. EngB GTPase family. In terms of assembly, associates with the mitochondrial ribosome. It depends on Mg(2+) as a cofactor. Post-translationally, sumoylated upon ethanol stress.

Its subcellular location is the mitochondrion. Its function is as follows. Component of MIOREX complexes, large expressome-like assemblies of ribosomes with factors involved in all the steps of post-transcriptional gene expression. In Saccharomyces cerevisiae (strain ATCC 204508 / S288c) (Baker's yeast), this protein is MIOREX complex component 8.